Reading from the N-terminus, the 531-residue chain is GMP synthase [glutamine-hydrolyzing] (531 aa).

One can recognise a Glutamine amidotransferase type-1 domain in the interval 20-213; the sequence is KILIVDFGSQ…VRKVAGLKGD (194 aa). Cysteine 97 serves as the catalytic Nucleophile. Catalysis depends on residues histidine 187 and glutamate 189. Residues 214 to 406 form the GMPS ATP-PPase domain; the sequence is WTMRAFREEA…LGLPDVFVGR (193 aa). 241–247 contributes to the ATP binding site; it reads SGGVDSA.

As to quaternary structure, homodimer.

The enzyme catalyses XMP + L-glutamine + ATP + H2O = GMP + L-glutamate + AMP + diphosphate + 2 H(+). It participates in purine metabolism; GMP biosynthesis; GMP from XMP (L-Gln route): step 1/1. Catalyzes the synthesis of GMP from XMP. The polypeptide is GMP synthase [glutamine-hydrolyzing] (Afipia carboxidovorans (strain ATCC 49405 / DSM 1227 / KCTC 32145 / OM5) (Oligotropha carboxidovorans)).